The primary structure comprises 282 residues: Bifunctional protein FolD (282 aa).

NADP(+) is bound by residues 165–167 (NRS), S190, and I231.

It belongs to the tetrahydrofolate dehydrogenase/cyclohydrolase family. Homodimer.

The catalysed reaction is (6R)-5,10-methylene-5,6,7,8-tetrahydrofolate + NADP(+) = (6R)-5,10-methenyltetrahydrofolate + NADPH. It carries out the reaction (6R)-5,10-methenyltetrahydrofolate + H2O = (6R)-10-formyltetrahydrofolate + H(+). It participates in one-carbon metabolism; tetrahydrofolate interconversion. Its function is as follows. Catalyzes the oxidation of 5,10-methylenetetrahydrofolate to 5,10-methenyltetrahydrofolate and then the hydrolysis of 5,10-methenyltetrahydrofolate to 10-formyltetrahydrofolate. In Clostridium botulinum (strain Okra / Type B1), this protein is Bifunctional protein FolD.